Consider the following 422-residue polypeptide: p-hydroxyphenylacetate 3-hydroxylase, oxygenase component (422 aa).

Trp-112 provides a ligand contact to FMN. Substrate-binding residues include His-120 and Ser-146. Residues 146–148 (SSI) and 169–171 (WSS) each bind FMN. 263-266 (RPYF) provides a ligand contact to substrate. FMN contacts are provided by residues Arg-292, Tyr-296, 374 to 375 (AT), and 396 to 397 (HA). Tyr-296 serves as a coordination point for substrate.

It belongs to the HpaH/HsaA monooxygenase family. As to quaternary structure, homotetramer. The p-hydroxyphenylacetate 3-hydroxylase (HpaH) is composed of an oxygenase component C2 and a reductase component C1.

The catalysed reaction is 4-hydroxyphenylacetate + FMNH2 + O2 = 3,4-dihydroxyphenylacetate + FMN + H2O + H(+). It carries out the reaction 4-hydroxyphenylacetate + FADH2 + O2 = 3,4-dihydroxyphenylacetate + FAD + H2O + H(+). It participates in aromatic compound metabolism; 4-hydroxyphenylacetate degradation; pyruvate and succinate semialdehyde from 4-hydroxyphenylacetate: step 1/7. With respect to regulation, inhibited by flavin concentrations greater than 15 uM. Also inhibited by excess p-hydroxyphenylacetate (HPA). Functionally, oxygenase component of a two-component system that utilizes reduced FMN (FMNH2) supplied by the reductase component to catalyze the hydroxylation of 4-hydroxyphenylacetic acid, leading to the production of 3,4-dihydroxyphenylacetate (3,4-DHPA). Also utilizes other reduced flavins such as FADH2 and reduced riboflavin to a lesser extent. Only the compounds with a hydroxyl group in the para (p-) position can be hydroxylated. May also oxidize phenol to catechol, and hydroxylate other phenol derivatives. In Acinetobacter baumannii, this protein is p-hydroxyphenylacetate 3-hydroxylase, oxygenase component.